A 453-amino-acid polypeptide reads, in one-letter code: MLQLKDKQVLVLGLGDTGLSALRWLARQGARLSVADSRALPPGLDAVRQEFPGMAIHLGPFTAAAFKEAELIVASPGVPVAEPQVQAAIERGVPVVGDVELFAQARSAHAKVIAITGANGKSTVTTLVGEICKAAGFKTVVAGNIGLPVLDVINDAVDVYVLELSSFQLETTYSLAADAATVLNISADHMDRYADMQAYANAKARIFTRAGLQVLNADDAWSRGMAAEGVAQLTFGLDAPRSAQDFGLLHDAGEAWLARGQRKLMPVADLNITGLHNAANALAALALCTVLDIDEVVALQALRDFKGLPHRVQWVADIDGVSFYDDSKGTNVGATVAALHGLNRKLVLIAGGDGKGQDFAALRAPVAKHARAVVLIGRDAGVIADALQESGVLLEYGDTLEEAVVKAFNLADRGDAVLLSPACASLDMFRNYVHRAEVFVKAVTDLQKKEVSA.

117–123 (GANGKST) serves as a coordination point for ATP.

Belongs to the MurCDEF family.

Its subcellular location is the cytoplasm. It catalyses the reaction UDP-N-acetyl-alpha-D-muramoyl-L-alanine + D-glutamate + ATP = UDP-N-acetyl-alpha-D-muramoyl-L-alanyl-D-glutamate + ADP + phosphate + H(+). It participates in cell wall biogenesis; peptidoglycan biosynthesis. In terms of biological role, cell wall formation. Catalyzes the addition of glutamate to the nucleotide precursor UDP-N-acetylmuramoyl-L-alanine (UMA). This Methylobacillus flagellatus (strain ATCC 51484 / DSM 6875 / VKM B-1610 / KT) protein is UDP-N-acetylmuramoylalanine--D-glutamate ligase.